Consider the following 259-residue polypeptide: Imidazole glycerol phosphate synthase subunit HisF (259 aa).

Residues Asp11 and Asp130 contribute to the active site.

This sequence belongs to the HisA/HisF family. In terms of assembly, heterodimer of HisH and HisF.

The protein resides in the cytoplasm. It catalyses the reaction 5-[(5-phospho-1-deoxy-D-ribulos-1-ylimino)methylamino]-1-(5-phospho-beta-D-ribosyl)imidazole-4-carboxamide + L-glutamine = D-erythro-1-(imidazol-4-yl)glycerol 3-phosphate + 5-amino-1-(5-phospho-beta-D-ribosyl)imidazole-4-carboxamide + L-glutamate + H(+). The protein operates within amino-acid biosynthesis; L-histidine biosynthesis; L-histidine from 5-phospho-alpha-D-ribose 1-diphosphate: step 5/9. In terms of biological role, IGPS catalyzes the conversion of PRFAR and glutamine to IGP, AICAR and glutamate. The HisF subunit catalyzes the cyclization activity that produces IGP and AICAR from PRFAR using the ammonia provided by the HisH subunit. In Lactococcus lactis subsp. cremoris (strain MG1363), this protein is Imidazole glycerol phosphate synthase subunit HisF.